The chain runs to 382 residues: MKRHLNMLREFSIPLISGVIVALVWANISPESYQHFDHDRNFGPFSFHFIVNDFFMVLFFGIAAAEITQSCLPGGDLYPLRKAVNPLLATIGGVVGPVLVYVVLNALMGDPSLLRGWGIPTATDIALAWLVASLVFGKRHPAISFLLLLAIADDAIGLAIIALFYPDPNLPAAPQWLVLVLSGMGAAALLRRGNAQSYWPYIILGGGLSWAGLFMAHLHPALALVFIVPFLPHPHREKKHLFEEDMRDLSPLASFEHEWKVMVDFGLFLFGLANAGVTFGSIGAATWLVLASLVIGKTGGIFFMGWLGRRLGYPLPSRVGGKELALVGLIAGIGLTVALFVAGEAFTDPARQGAAKMGALMSAGCAVLALAAGRIMNVKRIT.

11 helical membrane-spanning segments follow: residues 10-30 (EFSI…NISP), 45-65 (FSFH…IAAA), 87-107 (LLAT…LNAL), 116-136 (GWGI…SLVF), 145-165 (FLLL…ALFY), 170-190 (LPAA…AALL), 211-231 (AGLF…VPFL), 252-272 (LASF…LFGL), 275-295 (AGVT…SLVI), 326-346 (LVGL…GEAF), and 353-373 (GAAK…LAAG).

The protein belongs to the NhaA Na(+)/H(+) (TC 2.A.33) antiporter family.

The protein resides in the cell inner membrane. The enzyme catalyses Na(+)(in) + 2 H(+)(out) = Na(+)(out) + 2 H(+)(in). Its function is as follows. Na(+)/H(+) antiporter that extrudes sodium in exchange for external protons. This is Na(+)/H(+) antiporter NhaA 1 from Pelobacter propionicus (strain DSM 2379 / NBRC 103807 / OttBd1).